The following is a 68-amino-acid chain: Protein SlyX homolog (68 aa).

It belongs to the SlyX family.

In Pseudomonas fluorescens (strain Pf0-1), this protein is Protein SlyX homolog.